The primary structure comprises 123 residues: Small ribosomal subunit protein uS12 (123 aa).

Residues 1–30 (MPTIQQLVRKGRQDKVEKNKTPALEGSPQR) form a disordered region. Positions 11–20 (GRQDKVEKNK) are enriched in basic and acidic residues. Asp89 carries the post-translational modification 3-methylthioaspartic acid.

It belongs to the universal ribosomal protein uS12 family. Part of the 30S ribosomal subunit. Contacts proteins S8 and S17. May interact with IF1 in the 30S initiation complex.

Its function is as follows. With S4 and S5 plays an important role in translational accuracy. In terms of biological role, interacts with and stabilizes bases of the 16S rRNA that are involved in tRNA selection in the A site and with the mRNA backbone. Located at the interface of the 30S and 50S subunits, it traverses the body of the 30S subunit contacting proteins on the other side and probably holding the rRNA structure together. The combined cluster of proteins S8, S12 and S17 appears to hold together the shoulder and platform of the 30S subunit. The sequence is that of Small ribosomal subunit protein uS12 (rpsL) from Streptomyces avermitilis (strain ATCC 31267 / DSM 46492 / JCM 5070 / NBRC 14893 / NCIMB 12804 / NRRL 8165 / MA-4680).